Consider the following 330-residue polypeptide: Peroxisomal membrane protein PEX13 (330 aa).

The span at 1 to 14 (MSAPPTNQPPPLPP) shows a compositional bias: pro residues. Positions 1-20 (MSAPPTNQPPPLPPRSFDNQ) are disordered. A helical transmembrane segment spans residues 193 to 213 (ASVNWPAALFWVVAIGGPWLI). The SH3 domain occupies 235 to 300 (APHYTAQALF…PINYVRIVGK (66 aa)).

This sequence belongs to the peroxin-13 family. In terms of assembly, interacts with PEX14/prx-14; forming the PEX13-PEX14 docking complex.

It localises to the peroxisome membrane. Component of the PEX13-PEX14 docking complex, a translocon channel that specifically mediates the import of peroxisomal cargo proteins bound to PEX5/prx-5 receptor. The PEX13-PEX14 docking complex forms a large import pore which can be opened to a diameter of about 9 nm. Mechanistically, PEX5/prx-5 receptor along with cargo proteins associates with the PEX14/prx-14 subunit of the PEX13-PEX14 docking complex in the cytosol, leading to the insertion of the receptor into the organelle membrane with the concomitant translocation of the cargo into the peroxisome matrix. This Caenorhabditis elegans protein is Peroxisomal membrane protein PEX13 (prx-13).